The following is a 295-amino-acid chain: Glutamyl-Q tRNA(Asp) synthetase (295 aa).

Residues 5 to 9 (RFAPS) and glutamate 41 each bind L-glutamate. A 'HIGH' region motif is present at residues 8 to 18 (PSPTGLLHIGS). Residues cysteine 97, cysteine 99, tyrosine 117, and cysteine 121 each coordinate Zn(2+). 2 residues coordinate L-glutamate: tyrosine 178 and arginine 196. Residues 234–238 (KWSKQ) carry the 'KMSKS' region motif. Lysine 237 provides a ligand contact to ATP.

This sequence belongs to the class-I aminoacyl-tRNA synthetase family. GluQ subfamily. Zn(2+) serves as cofactor.

Functionally, catalyzes the tRNA-independent activation of glutamate in presence of ATP and the subsequent transfer of glutamate onto a tRNA(Asp). Glutamate is transferred on the 2-amino-5-(4,5-dihydroxy-2-cyclopenten-1-yl) moiety of the queuosine in the wobble position of the QUC anticodon. The polypeptide is Glutamyl-Q tRNA(Asp) synthetase (Neisseria meningitidis serogroup A / serotype 4A (strain DSM 15465 / Z2491)).